We begin with the raw amino-acid sequence, 263 residues long: Indole-3-glycerol phosphate synthase (263 aa).

This sequence belongs to the TrpC family.

The enzyme catalyses 1-(2-carboxyphenylamino)-1-deoxy-D-ribulose 5-phosphate + H(+) = (1S,2R)-1-C-(indol-3-yl)glycerol 3-phosphate + CO2 + H2O. The protein operates within amino-acid biosynthesis; L-tryptophan biosynthesis; L-tryptophan from chorismate: step 4/5. The polypeptide is Indole-3-glycerol phosphate synthase (Laribacter hongkongensis (strain HLHK9)).